The primary structure comprises 239 residues: tRNA (guanine-N(1)-)-methyltransferase (239 aa).

Residues Gly-108 and 127-132 (LGDYVL) contribute to the S-adenosyl-L-methionine site.

The protein belongs to the RNA methyltransferase TrmD family. As to quaternary structure, homodimer.

The protein localises to the cytoplasm. It carries out the reaction guanosine(37) in tRNA + S-adenosyl-L-methionine = N(1)-methylguanosine(37) in tRNA + S-adenosyl-L-homocysteine + H(+). Its function is as follows. Specifically methylates guanosine-37 in various tRNAs. The polypeptide is tRNA (guanine-N(1)-)-methyltransferase (Streptococcus pneumoniae (strain JJA)).